The chain runs to 183 residues: Oligoribonuclease (183 aa).

The Exonuclease domain maps to 8 to 171 (LIWLDMEMTG…ADIRESIAEL (164 aa)). Y129 is a catalytic residue.

It belongs to the oligoribonuclease family.

The protein localises to the cytoplasm. Its function is as follows. 3'-to-5' exoribonuclease specific for small oligoribonucleotides. This Aromatoleum aromaticum (strain DSM 19018 / LMG 30748 / EbN1) (Azoarcus sp. (strain EbN1)) protein is Oligoribonuclease.